We begin with the raw amino-acid sequence, 815 residues long: Sodium/hydrogen exchanger 1 (815 aa).

Residues 1–98 (MVLRSGICGL…FPVLGIDYTH (98 aa)) lie on the Extracellular side of the membrane. Residue T42 is glycosylated (O-linked (GalNAc...) threonine). The interval 42 to 79 (TASTIRSSEPPRERSIGDVTTAPPEVTPESRPVNHSVT) is disordered. The O-linked (GalNAc...) serine glycan is linked to S56. Residues T61, T62, and T68 are each glycosylated (O-linked (GalNAc...) threonine). N75 carries an N-linked (GlcNAc...) asparagine glycan. A helical membrane pass occupies residues 99-121 (VRTPFEISLWILLACLMKIGFHV). The Cytoplasmic segment spans residues 122 to 130 (IPTISSIVP). Residues 131–148 (ESCLLIVVGLLVGGLIKG) traverse the membrane as a helical segment. The Extracellular portion of the chain corresponds to 149–158 (VGETPPFLQS). Residues 159-176 (DVFFLFLLPPIILDAGYF) form a helical membrane-spanning segment. At 177 to 186 (LPLRQFTENL) the chain is on the cytoplasmic side. A helical membrane pass occupies residues 187–215 (GTILIFAVVGTLWNAFFLGGLMYAVCLVG). The Extracellular segment spans residues 216–222 (GEQINNI). Residues 223–249 (GLLDNLLFGSIISAVDPVAVLAVFEEI) form a helical membrane-spanning segment. Residues 250-252 (HIN) lie on the Cytoplasmic side of the membrane. A helical membrane pass occupies residues 253–283 (ELLHILVFGESLLNDAVTVVLYHLFEEFANY). The Extracellular portion of the chain corresponds to 284 to 287 (EHVG). The chain crosses the membrane as a helical span at residues 288 to 322 (IVDIFLGFLSFFVVALGGVLVGVVYGVIAAFTSRF). The Cytoplasmic segment spans residues 323 to 328 (TSHIRV). The chain crosses the membrane as a helical span at residues 329-341 (IEPLFVFLYSYMA). The Extracellular segment spans residues 342–350 (YLSAELFHL). A helical transmembrane segment spans residues 351-371 (SGIMALIASGVVMRPYVEANI). Topologically, residues 372–373 (SH) are cytoplasmic. The chain crosses the membrane as a helical span at residues 374-404 (KSHTTIKYFLKMWSSVSETLIFIFLGVSTVA). The Extracellular portion of the chain corresponds to 405 to 410 (GSHHWN). Residues 411 to 438 (WTFVISTLLFCLIARVLGVLGLTWFINK) traverse the membrane as a helical segment. At 439 to 444 (FRIVKL) the chain is on the cytoplasmic side. The chain crosses the membrane as a helical span at residues 445-469 (TPKDQFIIAYGGLRGAIAFSLGYLL). Topologically, residues 470 to 475 (DKKHFP) are extracellular. A helical membrane pass occupies residues 476 to 505 (MCDLFLTAIITVIFFTVFVQGMTIRPLVDL). The interval 503-545 (VDLLAVKKKQETKRSINEEIHTQFLDHLLTGIEDICGHYGHHH) is interaction with TESC. Over 506-815 (LAVKKKQETK…EGEPFFPKGQ (310 aa)) the chain is Cytoplasmic. A PI(4,5)P2-binding region region spans residues 509 to 516 (KKKQETKR). The interaction with CHP2 stretch occupies residues 515 to 545 (KRSINEEIHTQFLDHLLTGIEDICGHYGHHH). The segment at 540-545 (HYGHHH) is confers pH-dependent PI(4,5)P2 binding. The interval 552–560 (RFNKKYVKK) is PI(4,5)P2-binding region. 2 positions are modified to phosphoserine: S599 and S602. Phosphothreonine is present on T603. Phosphoserine occurs at positions 605 and 648. Residues 633 to 815 (KILRNNLQKT…EGEPFFPKGQ (183 aa)) are interaction with TESC. Residues 633 to 815 (KILRNNLQKT…EGEPFFPKGQ (183 aa)) are interaction with CALM1. An interaction with PPP3CA region spans residues 684–687 (LTVP). S693, S697, and S703 each carry phosphoserine. Positions 715–720 (PVITID) are interaction with PPP3CA. 3 positions are modified to phosphoserine: S723, S726, and S729. The tract at residues 744–815 (LSRDPAKVAE…EGEPFFPKGQ (72 aa)) is disordered. The residue at position 779 (T779) is a Phosphothreonine. A compositionally biased stretch (polar residues) spans 782 to 791 (PSDSPSSQRI). Phosphoserine occurs at positions 785, 787, and 796.

Belongs to the monovalent cation:proton antiporter 1 (CPA1) transporter (TC 2.A.36) family. In terms of assembly, homodimer; dimerization is crucial for its function. Oligomer. Interacts with CALM1 in a calcium-dependent manner. Interacts with TESC. Interacts (via the C-terminal domain) with CHP1; the interaction occurs at the plasma membrane in a calcium-dependent manner and facilitates the maturation, cell surface expression, and function of SLC9A3. Interacts with CHP2; the interaction occurs in a calcium-dependent manner. Interacts with EZR; regulates the cytoskeletal interactions of SLC9A1 and promotes stress fiber formation. Post-translationally, O-glycosylated. In terms of processing, ubiquitinated, leading to its degradation by the proteasome. Ubiquitination is reduced by CHP1. Phosphorylation at Thr-779 increases SLC9A1 activity. Specifically dephosphorylated at Thr-779 by PPP3CA that negatively regulates SLC9A1 activity. Phosphorylation at Ser-648 by AKT1 reduces SLC9A1 binding to CALM1. Post-translationally, palmitoylated; may play a major role in SLC9A1 regulation. Kidney and intestine.

Its subcellular location is the cell membrane. It is found in the basolateral cell membrane. It catalyses the reaction Na(+)(in) + H(+)(out) = Na(+)(out) + H(+)(in). The catalysed reaction is Li(+)(out) + H(+)(in) = Li(+)(in) + H(+)(out). It carries out the reaction Li(+)(in) + Na(+)(out) = Li(+)(out) + Na(+)(in). Activated at acidic pHs. Inhibited by amiloride and 5-amino-substituted derivatives. Inhibited by cariporide and eniporide. Phosphatidylinositol 4,5-bisphosphate (PI(4,5)P2) and phosphatidylinositol 3,4,5-trisphosphate (PI(3,4,5)P3) bind and differentially regulate SLC9A1 activity. In terms of biological role, electroneutral Na(+) /H(+) antiporter that extrudes Na(+) in exchange for external protons driven by the inward sodium ion chemical gradient, protecting cells from acidification that occurs from metabolism. Exchanges intracellular H(+) ions for extracellular Na(+) in 1:1 stoichiometry. Plays a key role in maintening intracellular pH neutral and cell volume, and thus is important for cell growth, proliferation, migration and survival. In addition, can transport lithium Li(+) and also functions as a Na(+)/Li(+) antiporter. SLC9A1 also functions in membrane anchoring and organization of scaffolding complexes that coordinate signaling inputs. This Homo sapiens (Human) protein is Sodium/hydrogen exchanger 1.